A 178-amino-acid polypeptide reads, in one-letter code: Large ribosomal subunit protein uL6 (178 aa).

The protein belongs to the universal ribosomal protein uL6 family. As to quaternary structure, part of the 50S ribosomal subunit.

Functionally, this protein binds to the 23S rRNA, and is important in its secondary structure. It is located near the subunit interface in the base of the L7/L12 stalk, and near the tRNA binding site of the peptidyltransferase center. This Lactococcus lactis subsp. cremoris (strain SK11) protein is Large ribosomal subunit protein uL6.